We begin with the raw amino-acid sequence, 318 residues long: Retinol dehydrogenase 11 (318 aa).

Residues 1–21 (MVELMFPLLLLLLPFLLYMAA) form a helical; Signal-anchor for type II membrane protein membrane-spanning segment. The Cytoplasmic segment spans residues 22–318 (PQIRKMLSSG…SCDLLGLPID (297 aa)). An NADP(+)-binding site is contributed by 48–54 (GANTGIG). Residue Lys-112 is modified to N6-acetyllysine. Substrate is bound at residue Ser-177. Tyr-202 acts as the Proton acceptor in catalysis.

Belongs to the short-chain dehydrogenases/reductases (SDR) family. In terms of assembly, interacts with SELENOF. Not glycosylated. In terms of tissue distribution, predominantly expressed in the epithelial cells of prostate, in both basal and luminal secretory cell populations. Expressed at low levels in spleen, thymus, testis, ovary, small intestine, colon, peripherical blood leukocytes, kidney, adrenal gland and fetal liver. Not detected in prostatic fibromuscular stromal cells, endothelial cells, or infiltrating lymphocytes.

Its subcellular location is the endoplasmic reticulum membrane. It catalyses the reaction all-trans-retinol + NADP(+) = all-trans-retinal + NADPH + H(+). It carries out the reaction 11-cis-retinol + NADP(+) = 11-cis-retinal + NADPH + H(+). The catalysed reaction is 9-cis-retinol + NADP(+) = 9-cis-retinal + NADPH + H(+). The enzyme catalyses 13-cis-retinol + NADP(+) = 13-cis-retinal + NADPH + H(+). Its pathway is cofactor metabolism; retinol metabolism. Its activity is regulated as follows. SELENOF decreases the retinol dehydrogenase activity. Functionally, retinol dehydrogenase with a clear preference for NADP. Displays high activity towards 9-cis, 11-cis and all-trans-retinol, and to a lesser extent on 13-cis-retinol. Exhibits a low reductive activity towards unsaturated medium-chain aldehydes such as cis -6-nonenal and no activity toward nonanal or 4-hydroxy-nonenal. Has no dehydrogenase activity towards steroid. This Homo sapiens (Human) protein is Retinol dehydrogenase 11 (RDH11).